We begin with the raw amino-acid sequence, 510 residues long: Histidine ammonia-lyase (510 aa).

The segment at residues 143–145 (ASG) is a cross-link (5-imidazolinone (Ala-Gly)). Position 144 is a 2,3-didehydroalanine (Ser) (serine 144).

Belongs to the PAL/histidase family. Contains an active site 4-methylidene-imidazol-5-one (MIO), which is formed autocatalytically by cyclization and dehydration of residues Ala-Ser-Gly.

The protein localises to the cytoplasm. The enzyme catalyses L-histidine = trans-urocanate + NH4(+). It participates in amino-acid degradation; L-histidine degradation into L-glutamate; N-formimidoyl-L-glutamate from L-histidine: step 1/3. This chain is Histidine ammonia-lyase, found in Shewanella woodyi (strain ATCC 51908 / MS32).